A 434-amino-acid polypeptide reads, in one-letter code: MSNRKGGGGAGDYQEVIESLRRSQLIFEEDENAGPEIPTVVTSSSSASSQRSSASQHHRLNNMVVGGGGRDNEMSNNQNGNTPSVTIPSQCQVMTPRISSPSSVMAPSVTVTSGTVQQGKTFARIQGSSPSNTTHSTPTVAQAMQSVAPHIPIVGAGADDSSAEILSVFECPVCLEYMLPPYMQCPSGHLVCSNCRPKLQCCPTCRGPTPSVRNLGLEKIANTVRFPCKFSNSGCPLNFHHIDKMDHEELCEYRPYSCPCPGASCKWQGALADVMDHLKKVHKSITTLQGEDIVFLATDINLPGAVDWVMMQSCFDYNFMLVLEKQEKYDPAQSTQMFYAVVQLIGSKKEADNFVYRLELSANRRRMSWEATPRSIHEGVAFAIQQSDCLAFDTSAAQLFAENGNLGINVTISRIDGQQRRHPNESDAVDVEYD.

The disordered stretch occupies residues Phe27–Pro88. A compositionally biased stretch (low complexity) spans Ser43 to Ser55. Residues Met74–Pro88 show a composition bias toward polar residues. Residues Cys171–Arg206 form an RING-type; degenerate zinc finger. Residues Ile220–Ile415 form an SBD region. The SIAH-type; degenerate zinc finger occupies Thr223–Lys283. Zn(2+) contacts are provided by Cys228, Cys235, His247, Cys251, Cys258, Cys265, His277, and His282.

Belongs to the SINA (Seven in absentia) family. As to quaternary structure, interacts with tir-1.

The catalysed reaction is S-ubiquitinyl-[E2 ubiquitin-conjugating enzyme]-L-cysteine + [acceptor protein]-L-lysine = [E2 ubiquitin-conjugating enzyme]-L-cysteine + N(6)-ubiquitinyl-[acceptor protein]-L-lysine.. Its pathway is protein modification; protein ubiquitination. Functionally, E3 ubiquitin-protein ligase that mediates ubiquitination and subsequent proteasomal degradation of target proteins. E3 ubiquitin ligases accept ubiquitin from an E2 ubiquitin-conjugating enzyme in the form of a thioester and then directly transfers the ubiquitin to targeted substrates. It probably triggers the ubiquitin-mediated degradation of different substrates. The chain is E3 ubiquitin-protein ligase siah-1 from Caenorhabditis briggsae.